Consider the following 93-residue polypeptide: Cell division topological specificity factor (93 aa).

This sequence belongs to the MinE family.

Its function is as follows. Prevents the cell division inhibition by proteins MinC and MinD at internal division sites while permitting inhibition at polar sites. This ensures cell division at the proper site by restricting the formation of a division septum at the midpoint of the long axis of the cell. The protein is Cell division topological specificity factor of Agathobacter rectalis (strain ATCC 33656 / DSM 3377 / JCM 17463 / KCTC 5835 / VPI 0990) (Eubacterium rectale).